Reading from the N-terminus, the 865-residue chain is Protein translocase subunit SecA (865 aa).

Residues glutamine 93, 111–115 (GEGKT), and aspartate 501 each bind ATP. Zn(2+) contacts are provided by cysteine 841, cysteine 843, cysteine 852, and cysteine 853.

Belongs to the SecA family. As to quaternary structure, monomer and homodimer. Part of the essential Sec protein translocation apparatus which comprises SecA, SecYEG and auxiliary proteins SecDF-YajC and YidC. Requires Zn(2+) as cofactor.

The protein resides in the cell inner membrane. It localises to the cytoplasm. It carries out the reaction ATP + H2O + cellular proteinSide 1 = ADP + phosphate + cellular proteinSide 2.. Its function is as follows. Part of the Sec protein translocase complex. Interacts with the SecYEG preprotein conducting channel. Has a central role in coupling the hydrolysis of ATP to the transfer of proteins into and across the cell membrane, serving as an ATP-driven molecular motor driving the stepwise translocation of polypeptide chains across the membrane. The chain is Protein translocase subunit SecA from Helicobacter pylori (strain HPAG1).